We begin with the raw amino-acid sequence, 168 residues long: Large ribosomal subunit protein uL29c (168 aa).

A disordered region spans residues 1-20 (MLAIHSLSSTPCSSGLTSPP). The N-terminal 58 residues, 1 to 58 (MLAIHSLSSTPCSSGLTSPPKSTLLTKSSFHGLRLPSVNLSSSLRLRVQTPPSSVVVM), are a transit peptide targeting the chloroplast.

In terms of assembly, component of the chloroplast large ribosomal subunit (LSU). Mature 70S chloroplast ribosomes of higher plants consist of a small (30S) and a large (50S) subunit. The 30S small subunit contains 1 molecule of ribosomal RNA (16S rRNA) and 24 different proteins. The 50S large subunit contains 3 rRNA molecules (23S, 5S and 4.5S rRNA) and 33 different proteins.

The protein resides in the plastid. Its subcellular location is the chloroplast. In terms of biological role, component of the chloroplast ribosome (chloro-ribosome), a dedicated translation machinery responsible for the synthesis of chloroplast genome-encoded proteins, including proteins of the transcription and translation machinery and components of the photosynthetic apparatus. This Spinacia oleracea (Spinach) protein is Large ribosomal subunit protein uL29c (RPL29).